The sequence spans 383 residues: Pantothenate kinase 1 (383 aa).

Belongs to the type II pantothenate kinase family. As to expression, highly expressed in leaves and developing seeds. Expressed in roots, stems and flowers.

The enzyme catalyses (R)-pantothenate + ATP = (R)-4'-phosphopantothenate + ADP + H(+). Its pathway is cofactor biosynthesis; coenzyme A biosynthesis; CoA from (R)-pantothenate: step 1/5. Regulated by feedback inhibition by malonyl-CoA. In terms of biological role, catalyzes the phosphorylation of pantothenate the first step in CoA biosynthesis. May play a role in the physiological regulation of the intracellular CoA concentration. Functionally redudant with PANK2. In Arabidopsis thaliana (Mouse-ear cress), this protein is Pantothenate kinase 1 (PANK1).